Consider the following 469-residue polypeptide: Pup--protein ligase (469 aa).

E9 contributes to the Mg(2+) binding site. R53 is a binding site for ATP. Y55 provides a ligand contact to Mg(2+). The Proton acceptor role is filled by D57. E63 contacts Mg(2+). T66 and W430 together coordinate ATP.

Belongs to the Pup ligase/Pup deamidase family. Pup-conjugating enzyme subfamily.

The enzyme catalyses ATP + [prokaryotic ubiquitin-like protein]-L-glutamate + [protein]-L-lysine = ADP + phosphate + N(6)-([prokaryotic ubiquitin-like protein]-gamma-L-glutamyl)-[protein]-L-lysine.. It functions in the pathway protein degradation; proteasomal Pup-dependent pathway. Its pathway is protein modification; protein pupylation. Catalyzes the covalent attachment of the prokaryotic ubiquitin-like protein modifier Pup to the proteasomal substrate proteins, thereby targeting them for proteasomal degradation. This tagging system is termed pupylation. The ligation reaction involves the side-chain carboxylate of the C-terminal glutamate of Pup and the side-chain amino group of a substrate lysine. The chain is Pup--protein ligase from Kocuria rhizophila (strain ATCC 9341 / DSM 348 / NBRC 103217 / DC2201).